The sequence spans 224 residues: Extracellular protease inhibitor 10 (224 aa).

An N-terminal signal peptide occupies residues 1–22; it reads MKSAFTLSLALVAVTATISAAA. Kazal-like domains are found at residues 23-72, 90-127, and 156-210; these read DDNC…ECAS, TSGT…AKCK, and GYQG…PCPS. N25 carries N-linked (GlcNAc...) asparagine glycosylation. Intrachain disulfides connect C26-C56, C30-C49, and C38-C70. Positions 69 to 92 are disordered; that stretch reads ECASTPASSATPSPVTSSTGSTSG. The span at 71–92 shows a compositional bias: low complexity; it reads ASTPASSATPSPVTSSTGSTSG. Intrachain disulfides connect C96-C126, C100-C119, C162-C193, C167-C186, and C175-C208. N-linked (GlcNAc...) asparagine glycosylation occurs at N199. Residues 202-224 are disordered; sequence MVGEGPCPSQEQQQQQQQQQQKL. A compositionally biased stretch (low complexity) spans 211–224; it reads QEQQQQQQQQQQKL.

Interacts with host subtilisin-like protease P69B.

The protein resides in the secreted. In terms of biological role, secreted effector that interacts with and inhibits the pathogenesis-related P69B subtilisin-like serine protease of host tomato. Inhibition of host proteases by a pathogen extracellular protease inhibitor forms a specific type of defense-counterdefense mechanism between plants and microbial pathogens. The chain is Extracellular protease inhibitor 10 from Phytophthora infestans (Potato late blight agent).